The primary structure comprises 578 residues: Glycosyltransferase family 92 protein RCOM_0530710 (578 aa).

A helical membrane pass occupies residues 21 to 43 (SFFSVRSLTACLSFFVFLLFISS). A GT92 domain is found at 295–531 (YELCACTMLW…QNQGSKDRAP (237 aa)).

This sequence belongs to the glycosyltransferase 92 family.

Its subcellular location is the membrane. The protein is Glycosyltransferase family 92 protein RCOM_0530710 of Ricinus communis (Castor bean).